The sequence spans 100 residues: Large ribosomal subunit protein uL23 (100 aa).

The protein belongs to the universal ribosomal protein uL23 family. In terms of assembly, part of the 50S ribosomal subunit. Contacts protein L29, and trigger factor when it is bound to the ribosome.

Its function is as follows. One of the early assembly proteins it binds 23S rRNA. One of the proteins that surrounds the polypeptide exit tunnel on the outside of the ribosome. Forms the main docking site for trigger factor binding to the ribosome. The sequence is that of Large ribosomal subunit protein uL23 from Shewanella sp. (strain MR-4).